The sequence spans 260 residues: 3'-5' ssDNA/RNA exonuclease TatD (260 aa).

A divalent metal cation is bound by residues E92, H128, and H153.

This sequence belongs to the metallo-dependent hydrolases superfamily. TatD-type hydrolase family. TatD subfamily. In terms of assembly, monomer. Mg(2+) serves as cofactor.

It is found in the cytoplasm. 3'-5' exonuclease that prefers single-stranded DNA and RNA. May play a role in the H(2)O(2)-induced DNA damage repair. This chain is 3'-5' ssDNA/RNA exonuclease TatD, found in Pectobacterium atrosepticum (strain SCRI 1043 / ATCC BAA-672) (Erwinia carotovora subsp. atroseptica).